The sequence spans 312 residues: D-alanine--D-alanine ligase (312 aa).

The 201-residue stretch at 108-308 (KLVWQQTGIP…YSELVVKVLS (201 aa)) folds into the ATP-grasp domain. 138–193 (VAKLGMPLFVKPASEGSSVAVEKVKSADALPAALEEAAKHDKIVIVEKSIEGGGEY) is an ATP binding site. Mg(2+)-binding residues include Asp262, Glu275, and Asn277.

The protein belongs to the D-alanine--D-alanine ligase family. Mg(2+) serves as cofactor. The cofactor is Mn(2+).

It localises to the cytoplasm. It carries out the reaction 2 D-alanine + ATP = D-alanyl-D-alanine + ADP + phosphate + H(+). It participates in cell wall biogenesis; peptidoglycan biosynthesis. Cell wall formation. The chain is D-alanine--D-alanine ligase from Burkholderia thailandensis (strain ATCC 700388 / DSM 13276 / CCUG 48851 / CIP 106301 / E264).